The primary structure comprises 708 residues: Ion-translocating oxidoreductase complex subunit C (708 aa).

4Fe-4S ferredoxin-type domains are found at residues 369-397 and 407-436; these read GEPQEEQSCIRCSACADACPADLLPQQLY and KATTHNIADCIECGACAWVCPSNIPLVQYF. Positions 377, 380, 383, 387, 416, 419, 422, and 426 each coordinate [4Fe-4S] cluster. The interval 630-682 is disordered; that stretch reads AKARKLEQQQANAEPEEQIDPRKAAVEAAIARAKARKLEQQQANAEPEEQIDP.

It belongs to the 4Fe4S bacterial-type ferredoxin family. RnfC subfamily. The complex is composed of six subunits: RsxA, RsxB, RsxC, RsxD, RsxE and RsxG. The cofactor is [4Fe-4S] cluster.

It is found in the cell inner membrane. In terms of biological role, part of a membrane-bound complex that couples electron transfer with translocation of ions across the membrane. Required to maintain the reduced state of SoxR. The polypeptide is Ion-translocating oxidoreductase complex subunit C (Escherichia coli O1:K1 / APEC).